Consider the following 382-residue polypeptide: Neuropeptide Y receptor type 1 (382 aa).

The Extracellular portion of the chain corresponds to methionine 1–histidine 33. Residues asparagine 2, asparagine 11, and asparagine 17 are each glycosylated (N-linked (GlcNAc...) asparagine). Residues leucine 34–valine 54 form a helical membrane-spanning segment. Topologically, residues serine 55 to asparagine 75 are cytoplasmic. The helical transmembrane segment at isoleucine 76 to threonine 96 threads the bilayer. The Extracellular portion of the chain corresponds to phenylalanine 97–asparagine 115. Cysteines 112 and 197 form a disulfide. The helical transmembrane segment at proline 116–glutamate 136 threads the bilayer. Residues arginine 137 to histidine 153 are Cytoplasmic-facing. A helical transmembrane segment spans residues alanine 154–isoleucine 174. Residues tyrosine 175–tyrosine 210 are Extracellular-facing. A helical transmembrane segment spans residues threonine 211 to phenylalanine 231. The Cytoplasmic segment spans residues lysine 232–arginine 259. Residues isoleucine 260–isoleucine 280 traverse the membrane as a helical segment. Residues phenylalanine 281–asparagine 298 are Extracellular-facing. Residues leucine 299 to tyrosine 319 traverse the membrane as a helical segment. The Cytoplasmic portion of the chain corresponds to glycine 320–isoleucine 382. A lipid anchor (S-palmitoyl cysteine) is attached at cysteine 337. 2 positions are modified to phosphoserine: serine 367 and serine 375.

It belongs to the G-protein coupled receptor 1 family. As to expression, brain.

Its subcellular location is the cell membrane. Its function is as follows. Receptor for neuropeptide Y and peptide YY. This chain is Neuropeptide Y receptor type 1 (Npy1r), found in Rattus norvegicus (Rat).